A 695-amino-acid chain; its full sequence is Lupanine 17-hydroxylase [cytochrome c] (695 aa).

Positions 1–26 are cleaved as a signal peptide; sequence MSANKNIWIIRLGVAFVCVAIGAAQA. The region spanning 598-677 is the Cytochrome c domain; sequence AMAESGRHIF…ALQAFILQKA (80 aa). Heme c-binding residues include Cys-612, Cys-615, and His-616.

The protein belongs to the bacterial PQQ dehydrogenase family. Monomer. Pyrroloquinoline quinone is required as a cofactor. Requires heme c as cofactor.

The protein localises to the periplasm. It carries out the reaction lupanine + 2 Fe(III)-[cytochrome c] + H2O = 17-hydroxylupanine + 2 Fe(II)-[cytochrome c] + 2 H(+). Its function is as follows. Catalyzes the first reaction in the catabolism of the alkaloid lupanine. It dehydrogenates lupanine, which can then be hydrated to produce 17-hydroxylupanine. In Pseudomonas sp, this protein is Lupanine 17-hydroxylase [cytochrome c] (luh).